We begin with the raw amino-acid sequence, 247 residues long: V-type proton ATPase subunit D (247 aa).

It belongs to the V-ATPase D subunit family. As to quaternary structure, V-ATPase is a heteromultimeric enzyme made up of two complexes: the ATP-hydrolytic V1 complex and the proton translocation V0 complex. The V1 complex consists of three catalytic AB heterodimers that form a heterohexamer, three peripheral stalks each consisting of EG heterodimers, one central rotor including subunits D and F, and the regulatory subunits C and H. The proton translocation complex V0 consists of the proton transport subunit a, a ring of proteolipid subunits c9c'', rotary subunit d, subunits e and f, and the accessory subunits ATP6AP1/Ac45 and ATP6AP2/PRR. Interacts with SNX10.

It is found in the membrane. The protein resides in the cytoplasmic vesicle. Its subcellular location is the clathrin-coated vesicle membrane. It localises to the cytoplasm. The protein localises to the cytoskeleton. It is found in the microtubule organizing center. The protein resides in the centrosome. Its subcellular location is the cell projection. It localises to the cilium. Its function is as follows. Subunit of the V1 complex of vacuolar(H+)-ATPase (V-ATPase), a multisubunit enzyme composed of a peripheral complex (V1) that hydrolyzes ATP and a membrane integral complex (V0) that translocates protons. V-ATPase is responsible for acidifying and maintaining the pH of intracellular compartments and in some cell types, is targeted to the plasma membrane, where it is responsible for acidifying the extracellular environment. May play a role in cilium biogenesis through regulation of the transport and the localization of proteins to the cilium. The polypeptide is V-type proton ATPase subunit D (ATP6V1D) (Oryctolagus cuniculus (Rabbit)).